The sequence spans 192 residues: Ion-translocating oxidoreductase complex subunit B (192 aa).

The interval 1-26 (MNAIWIAVAAVSLLGLAFGAILGYAS) is hydrophobic. Positions 32–91 (EDDPVVEKIDEILPQSQCGQCGYPGCRPYAETISCNGEKINRCAPGGEAVMLKIAELLNV) constitute a 4Fe-4S domain. [4Fe-4S] cluster contacts are provided by C49, C52, C57, C74, C117, C120, C123, C127, C147, C150, C153, and C157. 2 4Fe-4S ferredoxin-type domains span residues 108–137 (MVAV…GATR) and 138–167 (AMHT…LQPV).

Belongs to the 4Fe4S bacterial-type ferredoxin family. RnfB subfamily. As to quaternary structure, the complex is composed of six subunits: RsxA, RsxB, RsxC, RsxD, RsxE and RsxG. [4Fe-4S] cluster serves as cofactor.

The protein localises to the cell inner membrane. Part of a membrane-bound complex that couples electron transfer with translocation of ions across the membrane. Required to maintain the reduced state of SoxR. This is Ion-translocating oxidoreductase complex subunit B from Escherichia coli O6:K15:H31 (strain 536 / UPEC).